A 523-amino-acid polypeptide reads, in one-letter code: ATP synthase subunit alpha (523 aa).

ATP is bound at residue G173–T180.

Belongs to the ATPase alpha/beta chains family. In terms of assembly, F-type ATPases have 2 components, CF(1) - the catalytic core - and CF(0) - the membrane proton channel. CF(1) has five subunits: alpha(3), beta(3), gamma(1), delta(1), epsilon(1). CF(0) has three main subunits: a(1), b(2) and c(9-12). The alpha and beta chains form an alternating ring which encloses part of the gamma chain. CF(1) is attached to CF(0) by a central stalk formed by the gamma and epsilon chains, while a peripheral stalk is formed by the delta and b chains.

The protein resides in the cell membrane. It carries out the reaction ATP + H2O + 4 H(+)(in) = ADP + phosphate + 5 H(+)(out). Functionally, produces ATP from ADP in the presence of a proton gradient across the membrane. The alpha chain is a regulatory subunit. The chain is ATP synthase subunit alpha from Streptomyces griseus subsp. griseus (strain JCM 4626 / CBS 651.72 / NBRC 13350 / KCC S-0626 / ISP 5235).